Consider the following 203-residue polypeptide: Glycerol-3-phosphate acyltransferase (203 aa).

4 consecutive transmembrane segments (helical) span residues 4–24 (LALIMTMAAYLLGSISSAVLI), 68–88 (IPVWGGYFLGIDPIILGVIAI), 117–137 (PIGLDLTGLVMLTWLSVAVLF), and 155–175 (TWMFKPQYTLPVAMLCCLIVF).

This sequence belongs to the PlsY family. As to quaternary structure, probably interacts with PlsX.

The protein localises to the cell inner membrane. It catalyses the reaction an acyl phosphate + sn-glycerol 3-phosphate = a 1-acyl-sn-glycero-3-phosphate + phosphate. The protein operates within lipid metabolism; phospholipid metabolism. Its function is as follows. Catalyzes the transfer of an acyl group from acyl-phosphate (acyl-PO(4)) to glycerol-3-phosphate (G3P) to form lysophosphatidic acid (LPA). This enzyme utilizes acyl-phosphate as fatty acyl donor, but not acyl-CoA or acyl-ACP. This is Glycerol-3-phosphate acyltransferase from Vibrio campbellii (strain ATCC BAA-1116).